The following is a 25-amino-acid chain: Histone H4 (25 aa).

The span at 1-14 (MSGRGKGGKGLGKG) shows a compositional bias: gly residues. The interval 1–25 (MSGRGKGGKGLGKGGAKRHRKVLRD) is disordered. The residue at position 2 (serine 2) is an N-acetylserine. N6-acetyllysine occurs at positions 6, 9, 13, 17, and 21. Basic residues predominate over residues 15 to 25 (GAKRHRKVLRD). The DNA-binding element occupies 17-21 (KRHRK).

Belongs to the histone H4 family. In terms of assembly, the nucleosome is a histone octamer containing two molecules each of H2A, H2B, H3 and H4 assembled in one H3-H4 heterotetramer and two H2A-H2B heterodimers. The octamer wraps approximately 147 bp of DNA.

The protein localises to the nucleus. It localises to the chromosome. Functionally, core component of nucleosome. Nucleosomes wrap and compact DNA into chromatin, limiting DNA accessibility to the cellular machineries which require DNA as a template. Histones thereby play a central role in transcription regulation, DNA repair, DNA replication and chromosomal stability. DNA accessibility is regulated via a complex set of post-translational modifications of histones, also called histone code, and nucleosome remodeling. The polypeptide is Histone H4 (Medicago sativa (Alfalfa)).